The following is a 975-amino-acid chain: C-1-tetrahydrofolate synthase, mitochondrial (975 aa).

Residues 1–34 constitute a mitochondrion transit peptide; the sequence is MLSRLSLLSNSRAFQQARWRIYRLKVSPTVHASQ. Residues 35–343 are methylenetetrahydrofolate dehydrogenase and cyclohydrolase; that stretch reads YHILSGRKLA…KPLPLHLESP (309 aa). Substrate-binding positions include 83–87 and 130–132; these read YVRMK and IQL. NADP(+) is bound by residues 201–203 and serine 226; that span reads GRS. 301 to 305 lines the substrate pocket; that stretch reads PGGVG. A formyltetrahydrofolate synthetase region spans residues 344-975; it reads VPSDIDISRA…DDDGEIEGLF (632 aa). 408–415 lines the ATP pocket; that stretch reads TPLGEGKS.

This sequence in the N-terminal section; belongs to the tetrahydrofolate dehydrogenase/cyclohydrolase family. The protein in the C-terminal section; belongs to the formate--tetrahydrofolate ligase family. As to quaternary structure, homodimer.

The protein localises to the mitochondrion. The catalysed reaction is (6R)-5,10-methylene-5,6,7,8-tetrahydrofolate + NADP(+) = (6R)-5,10-methenyltetrahydrofolate + NADPH. It carries out the reaction (6R)-5,10-methenyltetrahydrofolate + H2O = (6R)-10-formyltetrahydrofolate + H(+). It catalyses the reaction (6S)-5,6,7,8-tetrahydrofolate + formate + ATP = (6R)-10-formyltetrahydrofolate + ADP + phosphate. It participates in one-carbon metabolism; tetrahydrofolate interconversion. In terms of biological role, mitochondrial isozyme of C-1-tetrahydrofolate synthase. The trifunctional enzyme catalyzes the interconversion of the one-carbon derivatives of tetrahydrofolate (THF) between different oxidation states by the enzymatic activities 10-formyltetrahydrofolate synthetase, 5,lO-methenyltetrahydrofolate cyclohydrolase, and 5,lO-methylenetetrahydrofolate dehydrogenase. This Saccharomyces cerevisiae (strain ATCC 204508 / S288c) (Baker's yeast) protein is C-1-tetrahydrofolate synthase, mitochondrial.